Consider the following 195-residue polypeptide: U8 snoRNA-decapping enzyme (195 aa).

The Nudix hydrolase domain maps to 18-173 (GWRHACHALL…IGSAREQLLE (156 aa)). Substrate-binding residues include histidine 24, arginine 50, and phenylalanine 57. Mn(2+)-binding residues include glycine 59, glutamate 76, glutamate 80, and histidine 99. The Nudix box motif lies at 61 to 82 (FVDTQDRSLEDGLNRELREELG). Glutamine 170 serves as a coordination point for substrate. Position 173 (glutamate 173) interacts with Mn(2+).

The protein belongs to the Nudix hydrolase family. NUDT16 subfamily. Homodimer. Mg(2+) is required as a cofactor. Mn(2+) serves as cofactor. Requires Co(2+) as cofactor. In terms of tissue distribution, expressed strongly in lung, kidney, adrenal gland, testis, heart and brain.

The protein resides in the nucleus. Its subcellular location is the nucleoplasm. The protein localises to the nucleolus. It is found in the cytoplasm. It carries out the reaction a 5'-end (N(7)-methyl 5'-triphosphoguanosine)-ribonucleoside in mRNA + H2O = N(7)-methyl-GDP + a 5'-end phospho-ribonucleoside in mRNA + 2 H(+). The enzyme catalyses IDP + H2O = IMP + phosphate + H(+). It catalyses the reaction dIDP + H2O = dIMP + phosphate + H(+). The catalysed reaction is a 5'-end NAD(+)-phospho-ribonucleoside in mRNA + H2O = a 5'-end phospho-adenosine-phospho-ribonucleoside in mRNA + beta-nicotinamide D-ribonucleotide + 2 H(+). It carries out the reaction a 5'-end FAD-phospho-ribonucleoside in mRNA + H2O = a 5'-end phospho-adenosine-phospho-ribonucleoside in mRNA + FMN + 2 H(+). The enzyme catalyses a 5'-end CoA-ribonucleoside in mRNA + H2O = a 5'-end phospho-adenosine-phospho-ribonucleoside in mRNA + (R)-4'-phosphopantetheine + 2 H(+). With respect to regulation, the phosphatase activity is inhibited by the product IMP. RNA-binding and decapping enzyme that catalyzes the cleavage of the cap structure of snoRNAs and mRNAs in a metal-dependent manner. Part of the U8 snoRNP complex that is required for the accumulation of mature 5.8S and 28S rRNA. Has diphosphatase activity and removes m7G and/or m227G caps from U8 snoRNA and leaves a 5'monophosphate on the RNA. Also catalyzes the cleavage of the cap structure on mRNAs. Does not hydrolyze cap analog structures like 7-methylguanosine nucleoside triphosphate (m7GpppG). Also hydrolysis m7G- and m227G U3-capped RNAs but with less efficiencies. Has broad substrate specificity with manganese or cobalt as cofactor and can act on various RNA species. Binds to the U8 snoRNA; metal is not required for RNA-binding. May play a role in the regulation of snoRNAs and mRNAs degradation. Also acts as a phosphatase; hydrolyzes the non-canonical purine nucleotides inosine diphosphate (IDP) and deoxyinosine diphosphate (dITP) as well as guanosine diphosphate (GDP), deoxyguanosine diphosphate (dGDP), xanthine diphosphate (XDP), inosine triphosphate (ITP) and deoxyinosine triphosphate (ITP) to their respective monophosphate derivatives and does not distinguish between the deoxy- and ribose forms. The order of activity with different substrates is IDP &gt; dIDP &gt;&gt; GDP = dGDP &gt; XDP = ITP = dITP. Binds strongly to GTP, ITP and XTP. Participates in the hydrolysis of dIDP/IDP and probably excludes non-canonical purines from RNA and DNA precursor pools, thus preventing their incorporation into RNA and DNA and avoiding chromosomal lesions. Exhibits decapping activity towards NAD-capped RNAs and FAD-capped RNAs. Exhibits decapping activity towards dpCoA-capped RNAs in vitro. The chain is U8 snoRNA-decapping enzyme (NUDT16) from Homo sapiens (Human).